We begin with the raw amino-acid sequence, 131 residues long: NADPH-dependent 7-cyano-7-deazaguanine reductase (131 aa).

Residue Cys-41 is the Thioimide intermediate of the active site. Asp-48 functions as the Proton donor in the catalytic mechanism. Substrate-binding positions include 63–65 (VEL) and 82–83 (HE).

This sequence belongs to the GTP cyclohydrolase I family. QueF type 1 subfamily.

It is found in the cytoplasm. It catalyses the reaction 7-aminomethyl-7-carbaguanine + 2 NADP(+) = 7-cyano-7-deazaguanine + 2 NADPH + 3 H(+). Its pathway is tRNA modification; tRNA-queuosine biosynthesis. Catalyzes the NADPH-dependent reduction of 7-cyano-7-deazaguanine (preQ0) to 7-aminomethyl-7-deazaguanine (preQ1). This chain is NADPH-dependent 7-cyano-7-deazaguanine reductase, found in Nitratiruptor sp. (strain SB155-2).